An 861-amino-acid chain; its full sequence is ToMV resistance protein Tm-2(GCR236) (861 aa).

Positions 63–83 (VKNLLKDIQELAGDVEDLLDD) form a coiled coil. The NB-ARC domain occupies 162 to 388 (DDFNMLQAKL…LESMGHKVQD (227 aa)). Residue 185-192 (GMPGLGKT) coordinates ATP. LRR repeat units follow at residues 225 to 248 (LDIA…NLRS), 305 to 327 (LHAL…IFNF), 388 to 411 (DGCA…CFLY), 449 to 472 (LAED…TYNG), 510 to 536 (VARL…KLEK), 585 to 608 (MTCL…IVKL), 609 to 631 (TRLE…VWES), 652 to 680 (ISSF…FFEP), 689 to 710 (LRKL…IFSP), 712 to 735 (LKAL…LSSY), 736 to 758 (PHIA…SFPP), 784 to 810 (LRKL…GYSF), and 811 to 835 (PQLE…DVSM).

This sequence belongs to the disease resistance NB-LRR family. In terms of assembly, (Microbial infection) Interacts with tobamoviruses mouvement protein at the plasma membrane; this interaction triggers defense responses leading to programmed cell death. As to quaternary structure, binds to HSP90 proteins; this interaction seems required for defense responses toward tobamoviruses.

Its subcellular location is the cell membrane. Its function is as follows. Inhibitor of viral mouvements which confers resistance to some tobamoviruses including tomato mosaic virus (ToMV) (e.g. isolates L, W3 and SL-1) and tobacco mosaic virus (TMV), but not to resistance-breaking isolates (e.g. B7, LT1, LII, Ltbl, ToMV2, and ToMV1-2) ToMV and tomato brown rugose fruit virus (ToBRFV). Elicits a hypersensitive reaction in response to avirulent (Avr) movement proteins from resistance inducing tobamoviruses (e.g. ToMV and TMV) strains, thus leading to programmed cell death. This Solanum lycopersicum (Tomato) protein is ToMV resistance protein Tm-2(GCR236).